A 1435-amino-acid polypeptide reads, in one-letter code: Gag-Pol polyprotein (1435 aa).

Residue Gly2 is the site of N-myristoyl glycine; by host attachment. The interaction with Gp41 stretch occupies residues 7–31 (VLSGGELDRWEKIRLRPGGKKKYKL). Positions 8–43 (LSGGELDRWEKIRLRPGGKKKYKLKHIVWASRELER) are interaction with host CALM1. Residues 12–19 (ELDRWEKI) are interaction with host AP3D1. The segment at 14 to 33 (DRWEKIRLRPGGKKKYKLKH) is interaction with membrane phosphatidylinositol 4,5-bisphosphate and RNA. The Nuclear export signal motif lies at 16–22 (WEKIRLR). Residues 26–32 (KKKYKLK) carry the Nuclear localization signal motif. Residues 73-77 (EELKS) are interaction with membrane phosphatidylinositol 4,5-bisphosphate. A disordered region spans residues 106-127 (EEQNKSKKKAQQAAADTGNSSQ). At Tyr132 the chain carries Phosphotyrosine; by host. Residues 189-227 (NTVGGHQAAMQMLKETINEEAAEWDRLHPVQAGPVAPGQ) are interaction with human PPIA/CYPA and NUP153. Residues 277–363 (YSPSSILDIK…GGPGHKARVL (87 aa)) are dimerization/Multimerization of capsid protein p24. CCHC-type zinc fingers lie at residues 390–407 (VKCFNCGKEGHIAKNCRA) and 411–428 (KGCWKCGKEGHQMKDCTE). The dimerization of protease stretch occupies residues 489–493 (PQITL). The Peptidase A2 domain maps to 508–577 (KEALLDTGAD…TPVNIIGRNL (70 aa)). Catalysis depends on Asp513, which acts as the For protease activity; shared with dimeric partner. 2 dimerization of protease regions span residues 537–543 (GIGGFIK) and 576–588 (NLLTQIGCTLNFP). In terms of domain architecture, Reverse transcriptase spans 631–821 (EGKISKIGPE…PPFLWMGYEL (191 aa)). 3 residues coordinate Mg(2+): Asp697, Asp772, and Asp773. Residues 814–822 (FLWMGYELH) form an RT 'primer grip' region. Residues 985–1001 (WEAWWTDYWQATWIPEW) carry the Tryptophan repeat motif motif. Residues 1021–1144 (IVGAETFYVD…VDKLVSAGIR (124 aa)) enclose the RNase H type-1 domain. Asp1030, Glu1065, Asp1085, and Asp1136 together coordinate Mg(2+). The Integrase-type zinc-finger motif lies at 1150-1191 (DGIDKAQEEHEKYHTNWRAMASDFNLPPVVAKEIVASCNKCQ). Zn(2+)-binding residues include His1159, His1163, Cys1187, and Cys1190. One can recognise an Integrase catalytic domain in the interval 1201–1351 (VDCSPGIWQL…SAGERIVDII (151 aa)). Mg(2+) is bound by residues Asp1211, Asp1263, and Glu1299. The segment at residues 1370-1417 (FRVYYRDSRDPLWKGPAKLLWKGEGAVVIQDNSDIKVVPRRKAKIIRD) is a DNA-binding region (integrase-type).

As to quaternary structure, homotrimer; further assembles as hexamers of trimers. Interacts with gp41 (via C-terminus). Interacts with host CALM1; this interaction induces a conformational change in the Matrix protein, triggering exposure of the myristate group. Interacts with host AP3D1; this interaction allows the polyprotein trafficking to multivesicular bodies during virus assembly. Part of the pre-integration complex (PIC) which is composed of viral genome, matrix protein, Vpr and integrase. Homodimer; the homodimer further multimerizes as homohexamers or homopentamers. Interacts with human PPIA/CYPA; This interaction stabilizes the capsid. Interacts with human NUP153. Interacts with host PDZD8; this interaction stabilizes the capsid. Interacts with monkey TRIM5; this interaction destabilizes the capsid. In terms of assembly, homodimer, whose active site consists of two apposed aspartic acid residues. As to quaternary structure, heterodimer of p66 RT and p51 RT (RT p66/p51). Heterodimerization of RT is essential for DNA polymerase activity. The overall folding of the subdomains is similar in p66 RT and p51 RT but the spatial arrangements of the subdomains are dramatically different. Homotetramer; may further associate as a homohexadecamer. Part of the pre-integration complex (PIC) which is composed of viral genome, matrix protein, Vpr and integrase. Interacts with human SMARCB1/INI1 and human PSIP1/LEDGF isoform 1. Interacts with human KPNA3; this interaction might play a role in nuclear import of the pre-integration complex. Interacts with human NUP153; this interaction might play a role in nuclear import of the pre-integration complex. It depends on Mg(2+) as a cofactor. In terms of processing, specific enzymatic cleavages by the viral protease yield mature proteins. The protease is released by autocatalytic cleavage. The polyprotein is cleaved during and after budding, this process is termed maturation. Proteolytic cleavage of p66 RT removes the RNase H domain to yield the p51 RT subunit. Nucleocapsid protein p7 might be further cleaved after virus entry. Post-translationally, tyrosine phosphorylated presumably in the virion by a host kinase. Phosphorylation is apparently not a major regulator of membrane association. Phosphorylated possibly by host MAPK1; this phosphorylation is necessary for Pin1-mediated virion uncoating. In terms of processing, methylated by host PRMT6, impairing its function by reducing RNA annealing and the initiation of reverse transcription.

It is found in the host cell membrane. Its subcellular location is the host endosome. It localises to the host multivesicular body. The protein localises to the virion membrane. The protein resides in the host nucleus. It is found in the host cytoplasm. Its subcellular location is the virion. The enzyme catalyses Specific for a P1 residue that is hydrophobic, and P1' variable, but often Pro.. The catalysed reaction is Endohydrolysis of RNA in RNA/DNA hybrids. Three different cleavage modes: 1. sequence-specific internal cleavage of RNA. Human immunodeficiency virus type 1 and Moloney murine leukemia virus enzymes prefer to cleave the RNA strand one nucleotide away from the RNA-DNA junction. 2. RNA 5'-end directed cleavage 13-19 nucleotides from the RNA end. 3. DNA 3'-end directed cleavage 15-20 nucleotides away from the primer terminus.. It carries out the reaction 3'-end directed exonucleolytic cleavage of viral RNA-DNA hybrid.. It catalyses the reaction DNA(n) + a 2'-deoxyribonucleoside 5'-triphosphate = DNA(n+1) + diphosphate. Protease: The viral protease is inhibited by many synthetic protease inhibitors (PIs), such as amprenavir, atazanavir, indinavir, loprinavir, nelfinavir, ritonavir and saquinavir. Use of protease inhibitors in tritherapy regimens permit more ambitious therapeutic strategies. Reverse transcriptase/ribonuclease H: RT can be inhibited either by nucleoside RT inhibitors (NRTIs) or by non nucleoside RT inhibitors (NNRTIs). NRTIs act as chain terminators, whereas NNRTIs inhibit DNA polymerization by binding a small hydrophobic pocket near the RT active site and inducing an allosteric change in this region. Classical NRTIs are abacavir, adefovir (PMEA), didanosine (ddI), lamivudine (3TC), stavudine (d4T), tenofovir (PMPA), zalcitabine (ddC), and zidovudine (AZT). Classical NNRTIs are atevirdine (BHAP U-87201E), delavirdine, efavirenz (DMP-266), emivirine (I-EBU), and nevirapine (BI-RG-587). The tritherapies used as a basic effective treatment of AIDS associate two NRTIs and one NNRTI. Its function is as follows. Mediates, with Gag polyprotein, the essential events in virion assembly, including binding the plasma membrane, making the protein-protein interactions necessary to create spherical particles, recruiting the viral Env proteins, and packaging the genomic RNA via direct interactions with the RNA packaging sequence (Psi). Gag-Pol polyprotein may regulate its own translation, by the binding genomic RNA in the 5'-UTR. At low concentration, the polyprotein would promote translation, whereas at high concentration, the polyprotein would encapsidate genomic RNA and then shut off translation. Targets the polyprotein to the plasma membrane via a multipartite membrane-binding signal, that includes its myristoylated N-terminus. Matrix protein is part of the pre-integration complex. Implicated in the release from host cell mediated by Vpu. Binds to RNA. In terms of biological role, forms the conical core that encapsulates the genomic RNA-nucleocapsid complex in the virion. Most core are conical, with only 7% tubular. The core is constituted by capsid protein hexamer subunits. The core is disassembled soon after virion entry. Host restriction factors such as TRIM5-alpha or TRIMCyp bind retroviral capsids and cause premature capsid disassembly, leading to blocks in reverse transcription. Capsid restriction by TRIM5 is one of the factors which restricts HIV-1 to the human species. Host PIN1 apparently facilitates the virion uncoating. On the other hand, interactions with PDZD8 or CYPA stabilize the capsid. Functionally, encapsulates and protects viral dimeric unspliced genomic RNA (gRNA). Binds these RNAs through its zinc fingers. Acts as a nucleic acid chaperone which is involved in rearangement of nucleic acid secondary structure during gRNA retrotranscription. Also facilitates template switch leading to recombination. As part of the polyprotein, participates in gRNA dimerization, packaging, tRNA incorporation and virion assembly. Its function is as follows. Aspartyl protease that mediates proteolytic cleavages of Gag and Gag-Pol polyproteins during or shortly after the release of the virion from the plasma membrane. Cleavages take place as an ordered, step-wise cascade to yield mature proteins. This process is called maturation. Displays maximal activity during the budding process just prior to particle release from the cell. Also cleaves Nef and Vif, probably concomitantly with viral structural proteins on maturation of virus particles. Hydrolyzes host EIF4GI and PABP1 in order to shut off the capped cellular mRNA translation. The resulting inhibition of cellular protein synthesis serves to ensure maximal viral gene expression and to evade host immune response. Also mediates cleavage of host YTHDF3. Mediates cleavage of host CARD8, thereby activating the CARD8 inflammasome, leading to the clearance of latent HIV-1 in patient CD4(+) T-cells after viral reactivation; in contrast, HIV-1 can evade CARD8-sensing when its protease remains inactive in infected cells prior to viral budding. Multifunctional enzyme that converts the viral RNA genome into dsDNA in the cytoplasm, shortly after virus entry into the cell. This enzyme displays a DNA polymerase activity that can copy either DNA or RNA templates, and a ribonuclease H (RNase H) activity that cleaves the RNA strand of RNA-DNA heteroduplexes in a partially processive 3' to 5' endonucleasic mode. Conversion of viral genomic RNA into dsDNA requires many steps. A tRNA(3)-Lys binds to the primer-binding site (PBS) situated at the 5'-end of the viral RNA. RT uses the 3' end of the tRNA primer to perform a short round of RNA-dependent minus-strand DNA synthesis. The reading proceeds through the U5 region and ends after the repeated (R) region which is present at both ends of viral RNA. The portion of the RNA-DNA heteroduplex is digested by the RNase H, resulting in a ssDNA product attached to the tRNA primer. This ssDNA/tRNA hybridizes with the identical R region situated at the 3' end of viral RNA. This template exchange, known as minus-strand DNA strong stop transfer, can be either intra- or intermolecular. RT uses the 3' end of this newly synthesized short ssDNA to perform the RNA-dependent minus-strand DNA synthesis of the whole template. RNase H digests the RNA template except for two polypurine tracts (PPTs) situated at the 5'-end and near the center of the genome. It is not clear if both polymerase and RNase H activities are simultaneous. RNase H probably can proceed both in a polymerase-dependent (RNA cut into small fragments by the same RT performing DNA synthesis) and a polymerase-independent mode (cleavage of remaining RNA fragments by free RTs). Secondly, RT performs DNA-directed plus-strand DNA synthesis using the PPTs that have not been removed by RNase H as primers. PPTs and tRNA primers are then removed by RNase H. The 3' and 5' ssDNA PBS regions hybridize to form a circular dsDNA intermediate. Strand displacement synthesis by RT to the PBS and PPT ends produces a blunt ended, linear dsDNA copy of the viral genome that includes long terminal repeats (LTRs) at both ends. In terms of biological role, catalyzes viral DNA integration into the host chromosome, by performing a series of DNA cutting and joining reactions. This enzyme activity takes place after virion entry into a cell and reverse transcription of the RNA genome in dsDNA. The first step in the integration process is 3' processing. This step requires a complex comprising the viral genome, matrix protein, Vpr and integrase. This complex is called the pre-integration complex (PIC). The integrase protein removes 2 nucleotides from each 3' end of the viral DNA, leaving recessed CA OH's at the 3' ends. In the second step, the PIC enters cell nucleus. This process is mediated through integrase and Vpr proteins, and allows the virus to infect a non dividing cell. This ability to enter the nucleus is specific of lentiviruses, other retroviruses cannot and rely on cell division to access cell chromosomes. In the third step, termed strand transfer, the integrase protein joins the previously processed 3' ends to the 5' ends of strands of target cellular DNA at the site of integration. The 5'-ends are produced by integrase-catalyzed staggered cuts, 5 bp apart. A Y-shaped, gapped, recombination intermediate results, with the 5'-ends of the viral DNA strands and the 3' ends of target DNA strands remaining unjoined, flanking a gap of 5 bp. The last step is viral DNA integration into host chromosome. This involves host DNA repair synthesis in which the 5 bp gaps between the unjoined strands are filled in and then ligated. Since this process occurs at both cuts flanking the HIV genome, a 5 bp duplication of host DNA is produced at the ends of HIV-1 integration. Alternatively, Integrase may catalyze the excision of viral DNA just after strand transfer, this is termed disintegration. The protein is Gag-Pol polyprotein (gag-pol) of Human immunodeficiency virus type 1 group M subtype B (strain 89.6) (HIV-1).